A 71-amino-acid polypeptide reads, in one-letter code: Small, acid-soluble spore protein 2 (71 aa).

It belongs to the alpha/beta-type SASP family.

Functionally, SASP are bound to spore DNA. They are double-stranded DNA-binding proteins that cause DNA to change to an a-like conformation. They protect the DNA backbone from chemical and enzymatic cleavage and are thus involved in dormant spore's high resistance to UV light. The polypeptide is Small, acid-soluble spore protein 2 (Bacillus subtilis).